The chain runs to 341 residues: Alanine racemase (341 aa).

The active-site Proton acceptor; specific for D-alanine is the lysine 33. Lysine 33 carries the post-translational modification N6-(pyridoxal phosphate)lysine. Position 126 (arginine 126) interacts with substrate. Tyrosine 236 serves as the catalytic Proton acceptor; specific for L-alanine. Substrate is bound at residue methionine 284.

The protein belongs to the alanine racemase family. Pyridoxal 5'-phosphate is required as a cofactor.

It carries out the reaction L-alanine = D-alanine. The protein operates within amino-acid biosynthesis; D-alanine biosynthesis; D-alanine from L-alanine: step 1/1. Functionally, catalyzes the interconversion of L-alanine and D-alanine. In Aquifex pyrophilus, this protein is Alanine racemase (alr).